Consider the following 191-residue polypeptide: Imidazoleglycerol-phosphate dehydratase (191 aa).

This sequence belongs to the imidazoleglycerol-phosphate dehydratase family.

The protein resides in the cytoplasm. The enzyme catalyses D-erythro-1-(imidazol-4-yl)glycerol 3-phosphate = 3-(imidazol-4-yl)-2-oxopropyl phosphate + H2O. Its pathway is amino-acid biosynthesis; L-histidine biosynthesis; L-histidine from 5-phospho-alpha-D-ribose 1-diphosphate: step 6/9. The protein is Imidazoleglycerol-phosphate dehydratase of Methanococcoides burtonii (strain DSM 6242 / NBRC 107633 / OCM 468 / ACE-M).